Consider the following 118-residue polypeptide: UPF0102 protein RSal33209_1090 (118 aa).

The protein belongs to the UPF0102 family.

The chain is UPF0102 protein RSal33209_1090 from Renibacterium salmoninarum (strain ATCC 33209 / DSM 20767 / JCM 11484 / NBRC 15589 / NCIMB 2235).